The chain runs to 321 residues: Polyamine aminopropyltransferase (321 aa).

In terms of domain architecture, PABS spans 23-256; sequence HLLYLEHAGP…DEWSFSFGSD (234 aa). Gln53 lines the S-methyl-5'-thioadenosine pocket. Spermidine-binding residues include His84 and Asp108. Residues Glu127 and 159-160 contribute to the S-methyl-5'-thioadenosine site; that span reads DG. Asp177 (proton acceptor) is an active-site residue.

It belongs to the spermidine/spermine synthase family. Homodimer or homotetramer.

It localises to the cytoplasm. It catalyses the reaction S-adenosyl 3-(methylsulfanyl)propylamine + putrescine = S-methyl-5'-thioadenosine + spermidine + H(+). It participates in amine and polyamine biosynthesis; spermidine biosynthesis; spermidine from putrescine: step 1/1. Catalyzes the irreversible transfer of a propylamine group from the amino donor S-adenosylmethioninamine (decarboxy-AdoMet) to putrescine (1,4-diaminobutane) to yield spermidine. The protein is Polyamine aminopropyltransferase of Korarchaeum cryptofilum (strain OPF8).